Consider the following 309-residue polypeptide: ATP synthase gamma chain (309 aa).

This sequence belongs to the ATPase gamma chain family. In terms of assembly, F-type ATPases have 2 components, CF(1) - the catalytic core - and CF(0) - the membrane proton channel. CF(1) has five subunits: alpha(3), beta(3), gamma(1), delta(1), epsilon(1). CF(0) has three main subunits: a, b and c.

The protein localises to the cell membrane. In terms of biological role, produces ATP from ADP in the presence of a proton gradient across the membrane. The gamma chain is believed to be important in regulating ATPase activity and the flow of protons through the CF(0) complex. The sequence is that of ATP synthase gamma chain from Ligilactobacillus salivarius (strain UCC118) (Lactobacillus salivarius).